Reading from the N-terminus, the 365-residue chain is Protein-glutamate methylesterase/protein-glutamine glutaminase 2 (365 aa).

Residues 18–135 enclose the Response regulatory domain; the sequence is RVLIVDDSAM…GQGLPAIMRD (118 aa). Residue aspartate 69 is modified to 4-aspartylphosphate. One can recognise a CheB-type methylesterase domain in the interval 162–355; sequence GASEDWIHAL…ARMMLAAAAD (194 aa). Catalysis depends on residues serine 174, histidine 200, and aspartate 297.

It belongs to the CheB family. In terms of processing, phosphorylated by CheA. Phosphorylation of the N-terminal regulatory domain activates the methylesterase activity.

The protein resides in the cytoplasm. The enzyme catalyses [protein]-L-glutamate 5-O-methyl ester + H2O = L-glutamyl-[protein] + methanol + H(+). The catalysed reaction is L-glutaminyl-[protein] + H2O = L-glutamyl-[protein] + NH4(+). Functionally, involved in chemotaxis. Part of a chemotaxis signal transduction system that modulates chemotaxis in response to various stimuli. Catalyzes the demethylation of specific methylglutamate residues introduced into the chemoreceptors (methyl-accepting chemotaxis proteins or MCP) by CheR. Also mediates the irreversible deamidation of specific glutamine residues to glutamic acid. The polypeptide is Protein-glutamate methylesterase/protein-glutamine glutaminase 2 (Cereibacter sphaeroides (strain ATCC 17023 / DSM 158 / JCM 6121 / CCUG 31486 / LMG 2827 / NBRC 12203 / NCIMB 8253 / ATH 2.4.1.) (Rhodobacter sphaeroides)).